Reading from the N-terminus, the 114-residue chain is Small ribosomal subunit protein uS13m (114 aa).

Positions 92-114 (DGLPLRGQRSHTNARTSRKRIRK) are disordered.

Belongs to the universal ribosomal protein uS13 family. Part of the small ribosomal subunit.

It localises to the mitochondrion. Its function is as follows. Located at the top of the head of the small subunit, it contacts several helices of the 18S rRNA. This chain is Small ribosomal subunit protein uS13m (RPS13), found in Oenothera berteroana (Bertero's evening primrose).